The primary structure comprises 285 residues: Bifunctional protein FolD (285 aa).

Residues 166-168 (GAS) and isoleucine 232 each bind NADP(+).

Belongs to the tetrahydrofolate dehydrogenase/cyclohydrolase family. Homodimer.

It catalyses the reaction (6R)-5,10-methylene-5,6,7,8-tetrahydrofolate + NADP(+) = (6R)-5,10-methenyltetrahydrofolate + NADPH. The catalysed reaction is (6R)-5,10-methenyltetrahydrofolate + H2O = (6R)-10-formyltetrahydrofolate + H(+). The protein operates within one-carbon metabolism; tetrahydrofolate interconversion. Functionally, catalyzes the oxidation of 5,10-methylenetetrahydrofolate to 5,10-methenyltetrahydrofolate and then the hydrolysis of 5,10-methenyltetrahydrofolate to 10-formyltetrahydrofolate. This chain is Bifunctional protein FolD, found in Buchnera aphidicola subsp. Schizaphis graminum (strain Sg).